A 92-amino-acid chain; its full sequence is RNA-binding protein Hfq (92 aa).

Residues 9–68 enclose the Sm domain; sequence DPYLNALRRERIPVSIYLVNGIKLQGQIESFDQFVILLKNTVSQMVYKHAISTVVPARSV. Positions 69–81 are enriched in polar residues; it reads SHNNGGTSHTQQA. Positions 69-92 are disordered; sequence SHNNGGTSHTQQAPAVEAVADKAE.

The protein belongs to the Hfq family. In terms of assembly, homohexamer.

RNA chaperone that binds small regulatory RNA (sRNAs) and mRNAs to facilitate mRNA translational regulation in response to envelope stress, environmental stress and changes in metabolite concentrations. Also binds with high specificity to tRNAs. The polypeptide is RNA-binding protein Hfq (Actinobacillus pleuropneumoniae serotype 5b (strain L20)).